A 463-amino-acid chain; its full sequence is ATP synthase subunit beta (463 aa).

Position 152–159 (152–159 (GGAGVGKT)) interacts with ATP.

Belongs to the ATPase alpha/beta chains family. F-type ATPases have 2 components, CF(1) - the catalytic core - and CF(0) - the membrane proton channel. CF(1) has five subunits: alpha(3), beta(3), gamma(1), delta(1), epsilon(1). CF(0) has three main subunits: a(1), b(2) and c(9-12). The alpha and beta chains form an alternating ring which encloses part of the gamma chain. CF(1) is attached to CF(0) by a central stalk formed by the gamma and epsilon chains, while a peripheral stalk is formed by the delta and b chains.

The protein resides in the cell membrane. It carries out the reaction ATP + H2O + 4 H(+)(in) = ADP + phosphate + 5 H(+)(out). Produces ATP from ADP in the presence of a proton gradient across the membrane. The catalytic sites are hosted primarily by the beta subunits. The protein is ATP synthase subunit beta of Clostridium botulinum (strain Eklund 17B / Type B).